The following is a 253-amino-acid chain: Uracil-DNA glycosylase (253 aa).

Catalysis depends on Asp-79, which acts as the Proton acceptor.

Belongs to the uracil-DNA glycosylase (UDG) superfamily. UNG family.

The protein resides in the cytoplasm. It carries out the reaction Hydrolyzes single-stranded DNA or mismatched double-stranded DNA and polynucleotides, releasing free uracil.. Its function is as follows. Excises uracil residues from the DNA which can arise as a result of misincorporation of dUMP residues by DNA polymerase or due to deamination of cytosine. In Xylella fastidiosa (strain 9a5c), this protein is Uracil-DNA glycosylase.